The chain runs to 358 residues: WD repeat domain phosphoinositide-interacting protein 4 (358 aa).

WD repeat units follow at residues 2-40 (AQQR…EKGH) and 188-228 (AHQS…KLVE). The L/FRRG motif signature appears at 229 to 232 (LRRG). One copy of the WD 3 repeat lies at 233 to 272 (TDPATLYCINFSHDSSFLCASSDKGTVHIFALKDTKLNRR).

Belongs to the WD repeat PROPPIN family.

Its subcellular location is the preautophagosomal structure. Its function is as follows. Component of the autophagy machinery that controls the major intracellular degradation process by which cytoplasmic materials are packaged into autophagosomes and delivered to lysosomes for degradation. Binds phosphatidylinositol 3-phosphate (PtdIns3P). The chain is WD repeat domain phosphoinositide-interacting protein 4 (wdr45) from Danio rerio (Zebrafish).